Reading from the N-terminus, the 138-residue chain is Glutaredoxin-C7 (138 aa).

The segment at 17 to 40 (SSTRGGGGGGMLGLTLFDPPGGEQ) is disordered. Residues 42–137 (AERIGRLVRE…PRLREVGALC (96 aa)) enclose the Glutaredoxin domain. An intrachain disulfide couples Cys62 to Cys65.

It belongs to the glutaredoxin family. CC-type subfamily.

Its subcellular location is the cytoplasm. In terms of biological role, has a glutathione-disulfide oxidoreductase activity in the presence of NADPH and glutathione reductase. Reduces low molecular weight disulfides and proteins. The protein is Glutaredoxin-C7 (GRXC7) of Oryza sativa subsp. japonica (Rice).